A 2549-amino-acid chain; its full sequence is Serine/threonine-protein kinase mTOR (2549 aa).

Position 1 is an N-acetylmethionine (methionine 1). The interval 1–651 (MLGTGPAVAT…HVVSQTAVQV (651 aa)) is interaction with NBN. HEAT repeat units lie at residues 16–53 (SSNV…MELR), 55–99 (MSQE…VEGG), 100–137 (NSTR…AMAG), 138–179 (DTFT…AISV), 180–220 (PTFF…LILT), 222–276 (QREP…RISS), 277–313 (MEGE…PRHI), 314–364 (TPFT…CCRD), 365–409 (LMEE…AFTD), 410–445 (TQYL…VAVR), 446–494 (SEFK…RAMG), 495–529 (PGIQ…RQIP), 530–563 (QLKK…GLAH), 564–596 (QLAS…EFEG), 597–636 (HSLT…SIHL), 637–683 (ISGH…DERF), 686–724 (HLAQ…MNPA), 727–766 (MPFL…NAPR), 769–811 (RPYM…VSGL), 814–853 (RKWV…STGY), 857–893 (PYRK…LLGA), 894–942 (LDPY…GNLP), 943–988 (LDEF…KCVQ), 989–1027 (FLPQ…KSHI), 1029–1068 (PYMD…GEFK), 1069–1105 (LYLP…LFGA), 1106–1144 (NLDD…RLTE), 1145–1188 (SLDF…GKKY), 1189–1225 (QIFI…LADE), 1226–1273 (EEDP…GAAR), 1274–1311 (RVSK…QAYN), and 1312–1345 (PMAR…ELAL). At serine 567 the chain carries Phosphoserine. The residue at position 1162 (threonine 1162) is a Phosphothreonine. Lysine 1218 is subject to N6-acetyllysine. Residue serine 1261 is modified to Phosphoserine. TPR repeat units lie at residues 1346–1382 (TSQD…GIVL), 1383–1408 (LGER…QKGP), 1409–1442 (TPAI…HFGE), 1443–1473 (LEIQ…NKED), 1474–1507 (PELM…VNDE), 1508–1541 (TQAK…RDTH), 1542–1574 (DGAF…LDAE), 1575–1614 (LTAM…RREI), 1615–1649 (IRQI…PHED), 1650–1693 (MRTW…PTAH), 1694–1731 (PQVT…AQHA), 1732–1786 (IATE…DRSW), 1787–1846 (YKAW…STEG), 1898–1930 (NNLQ…VKAI), 1931–1970 (QIDT…YHPQ), and 1971–2005 (ALIY…SNTL). In terms of domain architecture, FAT spans 1382–1982 (LLGERAAKCR…IYPLTVASKS (601 aa)). Residues lysine 1662, lysine 1702, and arginine 1749 each coordinate 1D-myo-inositol hexakisphosphate. Low complexity predominate over residues 1825-1860 (ITNATTAATTAASAAAATSTEGSNSESEAESNENSP). Residues 1825–1867 (ITNATTAATTAASAAAATSTEGSNSESEAESNENSPTPSPLQK) form a disordered region. The tract at residues 2012–2144 (VSEELIRVAI…DLELAVPGTY (133 aa)) is sufficient for interaction with the FKBP1A/rapamycin complex. Residue lysine 2066 forms a Glycyl lysine isopeptide (Lys-Gly) (interchain with G-Cter in ubiquitin) linkage. Positions 2156 to 2469 (IAPSLQVITS…GVELGEPAHK (314 aa)) constitute a PI3K/PI4K catalytic domain. Serine 2159 is subject to Phosphoserine; by TBK1. Residues 2162–2168 (VITSKQR) form a G-loop region. Threonine 2164 carries the phosphothreonine modification. Residues serine 2165 and glutamine 2167 each coordinate ATP. Phosphothreonine; by PKB/AKT1 is present on threonine 2173. Positions 2185, 2187, 2190, 2225, 2238, 2239, 2240, and 2245 each coordinate ATP. The interval 2258 to 2296 (KILLNIEHRIMLRMAPDYDHLTLMQKVEVFEHAVNNTAG) is interaction with MLST8. The tract at residues 2335 to 2343 (GLGDRHPSN) is catalytic loop. Asparagine 2343 provides a ligand contact to Mg(2+). Residues methionine 2345 and isoleucine 2356 each contribute to the ATP site. Residues 2355-2380 (HIDFGDCFEVAMTREKFPEKIPFRLT) are activation loop. Aspartate 2357 contacts Mg(2+). Threonine 2446 carries the phosphothreonine; by RPS6KB1 modification. Serine 2448 carries the phosphoserine; by RPS6KB1 modification. A phosphoserine mark is found at serine 2478 and serine 2481. The region spanning 2517-2549 (DTLDVPTQVELLIKQATSHENLCQCYIGWCPFW) is the FATC domain.

This sequence belongs to the PI3/PI4-kinase family. As to quaternary structure, part of the mechanistic target of rapamycin complex 1 (mTORC1) which contains MTOR, MLST8 and RPTOR. The mTORC1 complex is a 1 Md obligate dimer of two stoichiometric heterotetramers with overall dimensions of 290 A x 210 A x 135 A. It has a rhomboid shape and a central cavity, the dimeric interfaces are formed by interlocking interactions between the two MTOR and the two RPTOR subunits. The MLST8 subunit forms distal foot-like protuberances, and contacts only one MTOR within the complex, while the small AKT1S1/PRAS40 localizes to the midsection of the central core, in close proximity to RPTOR. mTORC1 associates with AKT1S1/PRAS40, which inhibits its activity by blocking MTOR substrate-recruitment site. Component of the mechanistic target of rapamycin complex 2 (mTORC2), consisting in two heterotretramers composed of MTOR, MLST8, RICTOR and MAPKAP1/SIN1. Interacts with PLPP7 and PML. Interacts with PRR5 and RICTOR; the interaction is direct within the mTORC2 complex and interaction with RICTOR is enhanced by deubiquitination of RICTOR by USP9X. mTORC1 and mTORC2 associate with DEPTOR, which regulates their activity. Interacts with WAC; WAC positively regulates MTOR activity by promoting the assembly of the TTT complex composed of TELO2, TTI1 and TTI2 and the RUVBL complex composed of RUVBL1 and RUVBL2 into the TTT-RUVBL complex which leads to the dimerization of the mTORC1 complex and its subsequent activation. Interacts with UBQLN1. Interacts with TTI1 and TELO2. Interacts with CLIP1; phosphorylates and regulates CLIP1. Interacts with NBN. Interacts with HTR6. Interacts with BRAT1. Interacts with MEAK7 (via C-terminal domain); the interaction increases upon nutrient stimulation. Interacts with TM4SF5; the interaction is positively regulated by arginine and is negatively regulated by leucine. Interacts with GPR137B. Interacts with NCKAP1L. Interacts with TPCN1 and TPCN2; the interaction is required for TPCN1 and TPCN2 sensitivity to ATP. Interacts with ATP6V1A and with CRYAB, forming a ternary complex. Interacts with SLC38A7; this interaction mediates the recruitment of mTORC1 to the lysosome and its subsequent activation. Interacts with TSPAN8. Post-translationally, autophosphorylates when part of mTORC1 or mTORC2. Phosphorylation at Ser-1261, Ser-2159 and Thr-2164 promotes autophosphorylation. Phosphorylated at Ser-2448 by RPS6KB1. Phosphorylation in the kinase domain modulates the interactions of MTOR with RPTOR and AKT1S1/PRAS40 and leads to increased intrinsic mTORC1 kinase activity. Phosphorylation at Ser-2159 by TBK1 in response to growth factors and pathogen recognition receptors promotes mTORC1 activity. Phosphorylation at Ser-2159 by TBK1 in response to EGF growth factor promotes mTORC2 activity, leading to AKT1 phosphorylation and activation. Phosphorylation at Thr-2173 in the ATP-binding region by AKT1 strongly reduces kinase activity. Ubiquitinated at Lys-2066 by the SCF(FBXO22) complex via 'Lys-27'-linked ubiquitination prevents mTORC1 substrate recruitment.

Its subcellular location is the lysosome membrane. It is found in the endoplasmic reticulum membrane. The protein localises to the golgi apparatus membrane. The protein resides in the cell membrane. It localises to the mitochondrion outer membrane. Its subcellular location is the cytoplasm. It is found in the nucleus. The protein localises to the PML body. The protein resides in the microsome membrane. It localises to the cytoplasmic vesicle. Its subcellular location is the phagosome. It carries out the reaction L-seryl-[protein] + ATP = O-phospho-L-seryl-[protein] + ADP + H(+). The enzyme catalyses L-threonyl-[protein] + ATP = O-phospho-L-threonyl-[protein] + ADP + H(+). The catalysed reaction is L-tyrosyl-[protein] + ATP = O-phospho-L-tyrosyl-[protein] + ADP + H(+). Its activity is regulated as follows. The mTORC1 complex is activated in response to nutrients, growth factors or amino acids: activation requires relocalization of the mTORC1 complex to lysosomes that is mediated by the Ragulator complex, SLC38A9, and the Rag GTPases RagA/RRAGA, RagB/RRAGB, RagC/RRAGC and RagD/RRAGD. Activation of mTORC1 by growth factors such as insulin involves AKT1-mediated phosphorylation of TSC1-TSC2, which leads to the activation of the RHEB GTPase a potent activator of the protein kinase activity of mTORC1. Insulin-stimulated and amino acid-dependent phosphorylation at Ser-1261 promotes autophosphorylation and the activation of mTORC1. On the other hand, low cellular energy levels can inhibit mTORC1 through activation of PRKAA1 while hypoxia inhibits mTORC1 through a REDD1-dependent mechanism which may also require PRKAA1. The kinase activity of MTOR within the mTORC1 complex is positively regulated by MLST8. The kinase activity of MTOR is inhibited by DEPTOR and AKT1S1. The non-canonical mTORC1 complex is independent of the RHEB GTPase and specifically mediates phosphorylation of MiT/TFE factors TFEB and TFE3 but not other mTORC1 substrates: it is activated by FLCN, which activates Rag GTPases RagC/RRAGC and RagD/RRAGD. MTOR is the target of the immunosuppressive and anti-cancer drug rapamycin which acts in complex with FKBP1A/FKBP12, and specifically inhibits its kinase activity. mTORC2 is also activated by growth factors, but seems to be nutrient-insensitive. mTORC2 associates and is directly activated by ribosomes. mTORC2 may also be regulated by RHEB but in an indirect manner through the PI3K signaling pathway. Its function is as follows. Serine/threonine protein kinase which is a central regulator of cellular metabolism, growth and survival in response to hormones, growth factors, nutrients, energy and stress signals. MTOR directly or indirectly regulates the phosphorylation of at least 800 proteins. Functions as part of 2 structurally and functionally distinct signaling complexes mTORC1 and mTORC2 (mTOR complex 1 and 2). In response to nutrients, growth factors or amino acids, mTORC1 is recruited to the lysosome membrane and promotes protein, lipid and nucleotide synthesis by phosphorylating key regulators of mRNA translation and ribosome synthesis. This includes phosphorylation of EIF4EBP1 and release of its inhibition toward the elongation initiation factor 4E (eiF4E). Moreover, phosphorylates and activates RPS6KB1 and RPS6KB2 that promote protein synthesis by modulating the activity of their downstream targets including ribosomal protein S6, eukaryotic translation initiation factor EIF4B, and the inhibitor of translation initiation PDCD4. Stimulates the pyrimidine biosynthesis pathway, both by acute regulation through RPS6KB1-mediated phosphorylation of the biosynthetic enzyme CAD, and delayed regulation, through transcriptional enhancement of the pentose phosphate pathway which produces 5-phosphoribosyl-1-pyrophosphate (PRPP), an allosteric activator of CAD at a later step in synthesis, this function is dependent on the mTORC1 complex. Regulates ribosome synthesis by activating RNA polymerase III-dependent transcription through phosphorylation and inhibition of MAF1 an RNA polymerase III-repressor. Activates dormant ribosomes by mediating phosphorylation of SERBP1, leading to SERBP1 inactivation and reactivation of translation. In parallel to protein synthesis, also regulates lipid synthesis through SREBF1/SREBP1 and LPIN1. To maintain energy homeostasis mTORC1 may also regulate mitochondrial biogenesis through regulation of PPARGC1A. In the same time, mTORC1 inhibits catabolic pathways: negatively regulates autophagy through phosphorylation of ULK1. Under nutrient sufficiency, phosphorylates ULK1 at 'Ser-758', disrupting the interaction with AMPK and preventing activation of ULK1. Also prevents autophagy through phosphorylation of the autophagy inhibitor DAP. Also prevents autophagy by phosphorylating RUBCNL/Pacer under nutrient-rich conditions. Prevents autophagy by mediating phosphorylation of AMBRA1, thereby inhibiting AMBRA1 ability to mediate ubiquitination of ULK1 and interaction between AMBRA1 and PPP2CA. mTORC1 exerts a feedback control on upstream growth factor signaling that includes phosphorylation and activation of GRB10 a INSR-dependent signaling suppressor. Among other potential targets mTORC1 may phosphorylate CLIP1 and regulate microtubules. The mTORC1 complex is inhibited in response to starvation and amino acid depletion. The non-canonical mTORC1 complex, which acts independently of RHEB, specifically mediates phosphorylation of MiT/TFE factors TFEB and TFE3 in the presence of nutrients, promoting their cytosolic retention and inactivation. Upon starvation or lysosomal stress, inhibition of mTORC1 induces dephosphorylation and nuclear translocation of TFEB and TFE3, promoting their transcription factor activity. The mTORC1 complex regulates pyroptosis in macrophages by promoting GSDMD oligomerization. MTOR phosphorylates RPTOR which in turn inhibits mTORC1. As part of the mTORC2 complex, MTOR transduces signals from growth factors to pathways involved in proliferation, cytoskeletal organization, lipogenesis and anabolic output. In response to growth factors, mTORC2 phosphorylates and activates AGC protein kinase family members, including AKT (AKT1, AKT2 and AKT3), PKC (PRKCA, PRKCB and PRKCE) and SGK1. In contrast to mTORC1, mTORC2 is nutrient-insensitive. mTORC2 plays a critical role in AKT1 activation by mediating phosphorylation of different sites depending on the context, such as 'Thr-450', 'Ser-473', 'Ser-477' or 'Thr-479', facilitating the phosphorylation of the activation loop of AKT1 on 'Thr-308' by PDPK1/PDK1 which is a prerequisite for full activation. mTORC2 also regulates the phosphorylation of SGK1 at 'Ser-422'. mTORC2 may regulate the actin cytoskeleton, through phosphorylation of PRKCA, PXN and activation of the Rho-type guanine nucleotide exchange factors RHOA and RAC1A or RAC1B. The mTORC2 complex also phosphorylates various proteins involved in insulin signaling, such as FBXW8 and IGF2BP1. May also regulate insulin signaling by acting as a tyrosine protein kinase that catalyzes phosphorylation of IGF1R and INSR. Regulates osteoclastogenesis by adjusting the expression of CEBPB isoforms. Plays an important regulatory role in the circadian clock function; regulates period length and rhythm amplitude of the suprachiasmatic nucleus (SCN) and liver clocks. The sequence is that of Serine/threonine-protein kinase mTOR from Mus musculus (Mouse).